Consider the following 452-residue polypeptide: Probable glycine dehydrogenase (decarboxylating) subunit 1 (452 aa).

Belongs to the GcvP family. N-terminal subunit subfamily. The glycine cleavage system is composed of four proteins: P, T, L and H. In this organism, the P 'protein' is a heterodimer of two subunits.

The catalysed reaction is N(6)-[(R)-lipoyl]-L-lysyl-[glycine-cleavage complex H protein] + glycine + H(+) = N(6)-[(R)-S(8)-aminomethyldihydrolipoyl]-L-lysyl-[glycine-cleavage complex H protein] + CO2. Functionally, the glycine cleavage system catalyzes the degradation of glycine. The P protein binds the alpha-amino group of glycine through its pyridoxal phosphate cofactor; CO(2) is released and the remaining methylamine moiety is then transferred to the lipoamide cofactor of the H protein. This chain is Probable glycine dehydrogenase (decarboxylating) subunit 1, found in Novosphingobium aromaticivorans (strain ATCC 700278 / DSM 12444 / CCUG 56034 / CIP 105152 / NBRC 16084 / F199).